A 319-amino-acid chain; its full sequence is Acetyl-coenzyme A carboxylase carboxyl transferase subunit alpha (319 aa).

One can recognise a CoA carboxyltransferase C-terminal domain in the interval Asn-35–Asp-296.

It belongs to the AccA family. As to quaternary structure, acetyl-CoA carboxylase is a heterohexamer composed of biotin carboxyl carrier protein (AccB), biotin carboxylase (AccC) and two subunits each of ACCase subunit alpha (AccA) and ACCase subunit beta (AccD).

The protein resides in the cytoplasm. The catalysed reaction is N(6)-carboxybiotinyl-L-lysyl-[protein] + acetyl-CoA = N(6)-biotinyl-L-lysyl-[protein] + malonyl-CoA. It functions in the pathway lipid metabolism; malonyl-CoA biosynthesis; malonyl-CoA from acetyl-CoA: step 1/1. Functionally, component of the acetyl coenzyme A carboxylase (ACC) complex. First, biotin carboxylase catalyzes the carboxylation of biotin on its carrier protein (BCCP) and then the CO(2) group is transferred by the carboxyltransferase to acetyl-CoA to form malonyl-CoA. This Escherichia coli O45:K1 (strain S88 / ExPEC) protein is Acetyl-coenzyme A carboxylase carboxyl transferase subunit alpha.